Consider the following 425-residue polypeptide: Enolase (425 aa).

Gln165 contributes to the (2R)-2-phosphoglycerate binding site. The active-site Proton donor is the Glu207. The Mg(2+) site is built by Asp244, Glu285, and Asp312. Residues Lys337, Arg366, Ser367, and Lys388 each contribute to the (2R)-2-phosphoglycerate site. The active-site Proton acceptor is the Lys337.

Belongs to the enolase family. The cofactor is Mg(2+).

The protein resides in the cytoplasm. It is found in the secreted. It localises to the cell surface. It carries out the reaction (2R)-2-phosphoglycerate = phosphoenolpyruvate + H2O. The protein operates within carbohydrate degradation; glycolysis; pyruvate from D-glyceraldehyde 3-phosphate: step 4/5. Functionally, catalyzes the reversible conversion of 2-phosphoglycerate (2-PG) into phosphoenolpyruvate (PEP). It is essential for the degradation of carbohydrates via glycolysis. In Wolbachia sp. subsp. Brugia malayi (strain TRS), this protein is Enolase.